The sequence spans 226 residues: ATP synthase F(0) complex subunit a (226 aa).

Met-1 is modified (N-formylmethionine). Transmembrane regions (helical) follow at residues 9–29 (FITP…FPSL), 68–88 (WTLM…LGLL), 97–117 (QLSM…ITGF), 138–158 (IPML…ALAV), 164–184 (ITAG…LMSI), and 189–209 (ALIT…VAMI).

This sequence belongs to the ATPase A chain family. Component of the ATP synthase complex composed at least of ATP5F1A/subunit alpha, ATP5F1B/subunit beta, ATP5MC1/subunit c (homooctomer), MT-ATP6/subunit a, MT-ATP8/subunit 8, ATP5ME/subunit e, ATP5MF/subunit f, ATP5MG/subunit g, ATP5MK/subunit k, ATP5MJ/subunit j, ATP5F1C/subunit gamma, ATP5F1D/subunit delta, ATP5F1E/subunit epsilon, ATP5PF/subunit F6, ATP5PB/subunit b, ATP5PD/subunit d, ATP5PO/subunit OSCP. ATP synthase complex consists of a soluble F(1) head domain (subunits alpha(3) and beta(3)) - the catalytic core - and a membrane F(0) domain - the membrane proton channel (subunits c, a, 8, e, f, g, k and j). These two domains are linked by a central stalk (subunits gamma, delta, and epsilon) rotating inside the F1 region and a stationary peripheral stalk (subunits F6, b, d, and OSCP). Interacts with DNAJC30; interaction is direct.

Its subcellular location is the mitochondrion inner membrane. The catalysed reaction is H(+)(in) = H(+)(out). Subunit a, of the mitochondrial membrane ATP synthase complex (F(1)F(0) ATP synthase or Complex V) that produces ATP from ADP in the presence of a proton gradient across the membrane which is generated by electron transport complexes of the respiratory chain. ATP synthase complex consist of a soluble F(1) head domain - the catalytic core - and a membrane F(1) domain - the membrane proton channel. These two domains are linked by a central stalk rotating inside the F(1) region and a stationary peripheral stalk. During catalysis, ATP synthesis in the catalytic domain of F(1) is coupled via a rotary mechanism of the central stalk subunits to proton translocation. With the subunit c (ATP5MC1), forms the proton-conducting channel in the F(0) domain, that contains two crucial half-channels (inlet and outlet) that facilitate proton movement from the mitochondrial intermembrane space (IMS) into the matrix. Protons are taken up via the inlet half-channel and released through the outlet half-channel, following a Grotthuss mechanism. The polypeptide is ATP synthase F(0) complex subunit a (Bos taurus (Bovine)).